We begin with the raw amino-acid sequence, 167 residues long: NADH-quinone oxidoreductase subunit B (167 aa).

[4Fe-4S] cluster-binding residues include cysteine 40, cysteine 41, cysteine 105, and cysteine 134.

This sequence belongs to the complex I 20 kDa subunit family. In terms of assembly, NDH-1 is composed of 14 different subunits. Subunits NuoB, C, D, E, F, and G constitute the peripheral sector of the complex. The cofactor is [4Fe-4S] cluster.

It is found in the cell inner membrane. The catalysed reaction is a quinone + NADH + 5 H(+)(in) = a quinol + NAD(+) + 4 H(+)(out). In terms of biological role, NDH-1 shuttles electrons from NADH, via FMN and iron-sulfur (Fe-S) centers, to quinones in the respiratory chain. The immediate electron acceptor for the enzyme in this species is believed to be ubiquinone. Couples the redox reaction to proton translocation (for every two electrons transferred, four hydrogen ions are translocated across the cytoplasmic membrane), and thus conserves the redox energy in a proton gradient. The chain is NADH-quinone oxidoreductase subunit B from Campylobacter jejuni subsp. jejuni serotype O:6 (strain 81116 / NCTC 11828).